Here is a 313-residue protein sequence, read N- to C-terminus: Probable GTP 3',8-cyclase (313 aa).

Residues 4–224 form the Radical SAM core domain; sequence RFGRSIEDLR…EIRSKHYRPR (221 aa). Arg13 is a GTP binding site. [4Fe-4S] cluster is bound by residues Cys20, Cys24, and Cys27. Lys60 is a binding site for GTP. Gly64 provides a ligand contact to S-adenosyl-L-methionine. Thr90 serves as a coordination point for GTP. S-adenosyl-L-methionine is bound at residue Ser114. Lys151 serves as a coordination point for GTP. The [4Fe-4S] cluster site is built by Cys244 and Cys247. 249 to 251 serves as a coordination point for GTP; it reads RIR. Residue Cys261 coordinates [4Fe-4S] cluster.

This sequence belongs to the radical SAM superfamily. MoaA family. [4Fe-4S] cluster serves as cofactor.

The enzyme catalyses GTP + AH2 + S-adenosyl-L-methionine = (8S)-3',8-cyclo-7,8-dihydroguanosine 5'-triphosphate + 5'-deoxyadenosine + L-methionine + A + H(+). Its pathway is cofactor biosynthesis; molybdopterin biosynthesis. Its function is as follows. Catalyzes the cyclization of GTP to (8S)-3',8-cyclo-7,8-dihydroguanosine 5'-triphosphate. This Sulfurisphaera tokodaii (strain DSM 16993 / JCM 10545 / NBRC 100140 / 7) (Sulfolobus tokodaii) protein is Probable GTP 3',8-cyclase.